The sequence spans 377 residues: Ferric enterobactin transport protein FepE (377 aa).

The Cytoplasmic portion of the chain corresponds to 1–41; that stretch reads MSSLNIKQGSDAHFPDYPLASPSNNEIDLLNLISVLWRAKK. A helical transmembrane segment spans residues 42–62; that stretch reads TVMAVVFAFACAGLLISFILP. Residues 63 to 338 are Periplasmic-facing; sequence QKWTSAAVVT…LPVKKDGPGK (276 aa). Residues 339–359 form a helical membrane-spanning segment; that stretch reads AIIVILSALIGGMVACGGVLL. Residues 360 to 377 lie on the Cytoplasmic side of the membrane; it reads RYAMASRKQDAMMADHLV.

The protein belongs to the WzzB/Cld/Rol family.

It is found in the cell inner membrane. In terms of biological role, part of the ferric enterobactin transport system. In Escherichia coli (strain K12), this protein is Ferric enterobactin transport protein FepE (fepE).